A 643-amino-acid chain; its full sequence is MNANPKFLSADAHVDAAAVAPLPNSRKVYVTGSQPDIRVPMREITQADTPTGFGGEKNPPIYVYDTSGPYTDPEAKIDIRAGLAALRQGWIDARGDTEVLGGLSSEYGLERAADPATADLRFPGLHRNPRRAQAGKNVSQMHYARQGIITPEMEYIAIRENQRRAEYLESLKASGPNGAKLAAMMGRQHPGQAFGAAAFGANAPAEITPEFVRSEVACGRAIIPANINHPESEPMIIGRNFLVKINANIGNSAVTSSIGEEVDKMTWAIRWGGDTVMDLSTGKHIHETREWIIRNSPVPIGTVPIYQALEKVNGKAEDLTWEIFRDTLIEQAEQGVDYFTIHAGVRLQYVPLTANRMTGIVSRGGSIMAKWCLAHHKESFLYEHFEEICEIMKAYDVSFSLGDGLRPGSIYDANDEAQLGELKTLGELTQIAWKHDVQVMIEGPGHVPMQLIKENMDLQLDWCKEAPFYTLGPLTTDIAPGYDHITSGIGAAMIGWFGTAMLCYVTPKEHLGLPNKDDVKEGIITYKLAAHAADLAKGHPGAQVRDNALSKARFEFRWEDQFNIGLDPDKAREFHDETLPKDSAKVAHFCSMCGPHFCSMKITQDVREFAAQQGVSETEALKKGMEVKAVEFVKTGAEIYHRQ.

Substrate contacts are provided by residues Asn248, Met277, Tyr306, His342, 362–364, 403–406, and Glu442; these read SRG and DGLR. His446 contacts Zn(2+). A substrate-binding site is contributed by Tyr469. Residue His510 coordinates Zn(2+). Cys590, Cys593, and Cys598 together coordinate [4Fe-4S] cluster.

This sequence belongs to the ThiC family. In terms of assembly, homodimer. [4Fe-4S] cluster serves as cofactor.

It catalyses the reaction 5-amino-1-(5-phospho-beta-D-ribosyl)imidazole + S-adenosyl-L-methionine = 4-amino-2-methyl-5-(phosphooxymethyl)pyrimidine + CO + 5'-deoxyadenosine + formate + L-methionine + 3 H(+). It functions in the pathway cofactor biosynthesis; thiamine diphosphate biosynthesis. In terms of biological role, catalyzes the synthesis of the hydroxymethylpyrimidine phosphate (HMP-P) moiety of thiamine from aminoimidazole ribotide (AIR) in a radical S-adenosyl-L-methionine (SAM)-dependent reaction. The chain is Phosphomethylpyrimidine synthase from Burkholderia lata (strain ATCC 17760 / DSM 23089 / LMG 22485 / NCIMB 9086 / R18194 / 383).